The chain runs to 161 residues: Small ribosomal subunit protein uS9 (161 aa).

A disordered region spans residues M1–Y38. Residues Q27–Y38 are compositionally biased toward basic and acidic residues.

It belongs to the universal ribosomal protein uS9 family.

The chain is Small ribosomal subunit protein uS9 from Rhodospirillum centenum (strain ATCC 51521 / SW).